The primary structure comprises 44 residues: MFKILNTKFVRSAPVVAAIWLSLTAGIIIEFNRFFPDLLFHPMS.

A helical membrane pass occupies residues 9 to 29 (FVRSAPVVAAIWLSLTAGIII).

It belongs to the PsaJ family.

Its subcellular location is the cellular thylakoid membrane. Functionally, may help in the organization of the PsaE and PsaF subunits. This Prochlorococcus marinus (strain MIT 9301) protein is Photosystem I reaction center subunit IX.